The chain runs to 704 residues: Protein kinase C-like 1 (704 aa).

Phosphothreonine; by autocatalysis occurs at positions 89 and 139. 2 Phorbol-ester/DAG-type zinc fingers span residues 165-215 (GHQF…IMQC) and 237-287 (PHRF…SNLC). The residue at position 324 (Thr324) is a Phosphothreonine; by autocatalysis. Residues 375 to 634 (FNLLKVLGKG…DGPIRQHCFF (260 aa)) enclose the Protein kinase domain. Residues 381-389 (LGKGSFGKV) and Lys404 each bind ATP. The active-site Proton acceptor is Asp499. One can recognise an AGC-kinase C-terminal domain in the interval 635–704 (RGVDWKRFEN…FSYTNPHFSK (70 aa)).

Belongs to the protein kinase superfamily. AGC Ser/Thr protein kinase family. PKC subfamily.

It catalyses the reaction L-seryl-[protein] + ATP = O-phospho-L-seryl-[protein] + ADP + H(+). It carries out the reaction L-threonyl-[protein] + ATP = O-phospho-L-threonyl-[protein] + ADP + H(+). Functionally, diacylglycerol (DAG)-dependent serine/threonine-protein kinase that phosphorylates a range of cellular proteins. Phosphorylates mlk-1, a component of the JNK pathway. Involved in axon regeneration after injury probably by activating the JNK pathway. Plays a role in resistance to fungal infection and in wound healing by promoting expression of antimicrobial peptide nlp-29 in the epidermis downstream of gpa-12 and plc-3 and upstream of tir-1-p38-like pathway. Probably by regulating neuronal transmission in ALA neurons, regulates the decrease in pharyngeal pumping during the quiescent state that precedes each larval molt, downstream of lin-3 and receptor let-23 and phospholipase plc-3. In Caenorhabditis elegans, this protein is Protein kinase C-like 1 (tpa-1).